The chain runs to 173 residues: RNA polymerase sigma factor YlaC (173 aa).

This sequence belongs to the sigma-70 factor family. ECF subfamily.

Sigma factors are initiation factors that promote the attachment of RNA polymerase to specific initiation sites and are then released. This sigma factor contributes to oxidative stress resistance. The polypeptide is RNA polymerase sigma factor YlaC (ylaC) (Bacillus subtilis (strain 168)).